Here is a 764-residue protein sequence, read N- to C-terminus: Oxysterol-binding protein-related protein 10 (764 aa).

Residues 1–74 (MERAVQGTDG…PSGGGGRRRE (74 aa)) are disordered. 2 stretches are compositionally biased toward low complexity: residues 15-47 (NSSS…SAAA) and 55-65 (RSSPGSVAASP). Ser29 and Ser30 each carry phosphoserine. Residue Arg38 is modified to Omega-N-methylarginine. A phosphoserine mark is found at Ser57, Ser60, and Ser64. In terms of domain architecture, PH spans 74 to 171 (EPALEGVLSK…WVTQLRACAK (98 aa)). Phosphothreonine is present on Thr196. Residues Ser201, Ser209, and Ser223 each carry the phosphoserine modification. Disordered regions lie at residues 304-335 (GQPS…NGTL) and 354-391 (AEDE…TELG). Over residues 359 to 370 (TSQPEPEPNSGS) the composition is skewed to polar residues. Acidic residues predominate over residues 374–389 (LSEDEKSDNEDKEETE). A 1,2-diacyl-sn-glycero-3-phospho-(1D-myo-inositol 4-phosphate) is bound by residues 413–418 (LTKVVL) and 477–480 (KPYN). A 1,2-diacyl-sn-glycero-3-phospho-L-serine-binding positions include 413-418 (LTKVVL) and Asn480. Residues 501–520 (KRTASRSPASCHEHPMADDP) are disordered. Residues 511–520 (CHEHPMADDP) are compositionally biased toward basic and acidic residues. 535 to 536 (HH) contacts a 1,2-diacyl-sn-glycero-3-phospho-(1D-myo-inositol 4-phosphate). Ser561 is an a 1,2-diacyl-sn-glycero-3-phospho-L-serine binding site. Residues 713-740 (DIDAATEQKRHLEEKQRVEERKRENLRT) are a coiled coil. Residues Lys721, Glu725, and Arg729 each contribute to the a 1,2-diacyl-sn-glycero-3-phospho-(1D-myo-inositol 4-phosphate) site.

This sequence belongs to the OSBP family. In terms of assembly, interacts with OSBPL9. Interacts with DIAPH1.

It localises to the cytoplasm. It is found in the cytoskeleton. Functionally, probable lipid transporter involved in lipid countertransport between the endoplasmic reticulum and the plasma membrane. Its ability to bind phosphatidylserine, suggests that it specifically exchanges phosphatidylserine with phosphatidylinositol 4-phosphate (PI4P), delivering phosphatidylserine to the plasma membrane in exchange for PI4P. Plays a role in negative regulation of lipid biosynthesis. Negatively regulates APOB secretion from hepatocytes. Binds cholesterol and acidic phospholipids. Also binds 25-hydroxycholesterol. Binds phosphatidylserine. The sequence is that of Oxysterol-binding protein-related protein 10 (OSBPL10) from Homo sapiens (Human).